We begin with the raw amino-acid sequence, 879 residues long: MKMLTRLQVLTLALFSKGFLLSLGDHNFLRREIKIEGDLVLGGLFPIKEKGTGTEECGRINEDRGIQRLEAMLFAIDEINKDDYLLPGVKLGVHILDTCSRDTYALEQSLEFVRASLTKVDEAEYMCPDGSYAIQENIPLLIAGVIGGSYSSVSIQVANLLRLFQIPQISYASTSAKLSDKSRYDYFARTVPPDFYQAKAMAEILRFFNWTYVSTVASEGDYGETGIEAFEQEARLRNICIATAEKVGRSNIRKSYDSVIRELLQKPNARVVVLFMRSDDSRELIAAASRANASFTWVASDGWGAQESIIKGSEHVAYGAITLELASQPVRQFDRYFQSLNPYNNHRNPWFRDFWEQKFQCSLQNKRNHRRVCDKHLAIDSSNYEQESKIMFVVNAVYAMAHALHKMQRTLCPNTTKLCDAMKILDGKKLYKDYLLKINFTAPFNPNKDADSIVKFDTFGDGMGRYNVFNFQNVGGKYSYLKVGHWAETLSLDVNSIHWSRNSVPTSQCSDPCAPNEMKNMQPGDVCCWICIPCESYEYLADEFTCMDCGPGQWPTADLTGCYDLPEDYIRWEDAWAIGPVTIACLGFMCTCMVITVFIKHNNTPLVKASGRELCYILLFGVGLSYCMTFFFIAKPSPVICALRRLGLGSSFAICYSALLTKTNCIARIFDGVKNGAQRPKFISPSSQVFICLGLILVQIVMVSVWLILEAPGTRRYTLAEKRETVILKCNVKDSSMLISLTYDVILVILCTVYAFKTRKCPENFNEAKFIGFTMYTTCIIWLAFLPIFYVTSSDYRVQTTTMCISVSLSGFVVLGCLFAPKVHIILFQPQKNVVTHRLHLNRFSVSGTGTTYSQSSASMYVPTVCNGREVLDSTTSSL.

Residues 1 to 24 (MKMLTRLQVLTLALFSKGFLLSLG) form the signal peptide. Topologically, residues 25–577 (DHNFLRREIK…DYIRWEDAWA (553 aa)) are extracellular. Cys57 and Cys99 are oxidised to a cystine. L-glutamate contacts are provided by residues Ser151 and 172–174 (AST). A glycan (N-linked (GlcNAc...) asparagine) is linked at Asn209. Tyr222 is an L-glutamate binding site. 7 disulfides stabilise this stretch: Cys240-Cys527, Cys361-Cys373, Cys412-Cys419, Cys509-Cys528, Cys513-Cys531, Cys534-Cys546, and Cys549-Cys562. N-linked (GlcNAc...) asparagine glycosylation is present at Asn292. An L-glutamate-binding site is contributed by Asp301. L-glutamate is bound at residue Lys389. N-linked (GlcNAc...) asparagine glycans are attached at residues Asn414 and Asn439. The helical transmembrane segment at 578–598 (IGPVTIACLGFMCTCMVITVF) threads the bilayer. Topologically, residues 599-613 (IKHNNTPLVKASGRE) are cytoplasmic. The chain crosses the membrane as a helical span at residues 614–634 (LCYILLFGVGLSYCMTFFFIA). The Extracellular portion of the chain corresponds to 635–688 (KPSPVICALRRLGLGSSFAICYSALLTKTNCIARIFDGVKNGAQRPKFISPSSQ). A helical transmembrane segment spans residues 689–709 (VFICLGLILVQIVMVSVWLIL). At 710–735 (EAPGTRRYTLAEKRETVILKCNVKDS) the chain is on the cytoplasmic side. The chain crosses the membrane as a helical span at residues 736-756 (SMLISLTYDVILVILCTVYAF). Residues 757–769 (KTRKCPENFNEAK) are Extracellular-facing. The chain crosses the membrane as a helical span at residues 770–790 (FIGFTMYTTCIIWLAFLPIFY). The Cytoplasmic portion of the chain corresponds to 791–807 (VTSSDYRVQTTTMCISV). A helical membrane pass occupies residues 808–828 (SLSGFVVLGCLFAPKVHIILF). Residues 829–879 (QPQKNVVTHRLHLNRFSVSGTGTTYSQSSASMYVPTVCNGREVLDSTTSSL) lie on the Extracellular side of the membrane.

The protein belongs to the G-protein coupled receptor 3 family. Interacts with TAMALIN.

It is found in the cell membrane. G-protein coupled receptor for glutamate. Ligand binding causes a conformation change that triggers signaling via guanine nucleotide-binding proteins (G proteins) and modulates the activity of down-stream effectors. Signaling inhibits adenylate cyclase activity. This is Metabotropic glutamate receptor 3 (GRM3) from Macaca fascicularis (Crab-eating macaque).